The sequence spans 481 residues: Two-component response regulator ORR32 (481 aa).

Residues 13 to 138 (HVMLVDDDTK…TIALWRVVAW (126 aa)) enclose the Response regulatory domain. 4-aspartylphosphate is present on Asp66.

The protein belongs to the ARR family. Type-B subfamily. In terms of processing, two-component system major event consists of a His-to-Asp phosphorelay between a sensor histidine kinase (HK) and a response regulator (RR). In plants, the His-to-Asp phosphorelay involves an additional intermediate named Histidine-containing phosphotransfer protein (HPt). This multistep phosphorelay consists of a His-Asp-His-Asp sequential transfer of a phosphate group between first a His and an Asp of the HK protein, followed by the transfer to a conserved His of the HPt protein and finally the transfer to an Asp in the receiver domain of the RR protein.

Functions as a response regulator involved in His-to-Asp phosphorelay signal transduction system. Phosphorylation of the Asp residue in the receiver domain activates the ability of the protein to promote the transcription of target genes. May directly activate some type-A response regulators in response to cytokinins. In Oryza sativa subsp. japonica (Rice), this protein is Two-component response regulator ORR32.